We begin with the raw amino-acid sequence, 35 residues long: U1-theraphotoxin-Hhn1a (35 aa).

3 disulfides stabilise this stretch: C2/C16, C9/C21, and C15/C28.

The protein belongs to the neurotoxin 10 (Hwtx-1) family. 24 (Hwtx-6) subfamily. Expressed by the venom gland.

It is found in the secreted. Gating-modifier toxin that dose-dependently inhibits inactivation of voltage-gated sodium channels and reduces the peak of sodium current in cockroach DUM neurons. In vivo, reversibly paralyzes cockroaches for several hours, paralyzes rat after intracerebroventricular injection and blocks the neuromuscular transmission of the isolated rat phrenic nerve-diaphragm preparation. The sequence is that of U1-theraphotoxin-Hhn1a from Cyriopagopus hainanus (Chinese bird spider).